The chain runs to 476 residues: Bifunctional protein HldE (476 aa).

The tract at residues 1–319 is ribokinase; that stretch reads MKVTLPAFEK…EALKSHQGES (319 aa). 195–198 contacts ATP; the sequence is NMSE. Residue D264 is part of the active site. Residues 345–476 form a cytidylyltransferase region; that stretch reads MTNGCFDILH…AIIQNIMSRH (132 aa).

The protein in the N-terminal section; belongs to the carbohydrate kinase PfkB family. It in the C-terminal section; belongs to the cytidylyltransferase family. In terms of assembly, homodimer.

It carries out the reaction D-glycero-beta-D-manno-heptose 7-phosphate + ATP = D-glycero-beta-D-manno-heptose 1,7-bisphosphate + ADP + H(+). The enzyme catalyses D-glycero-beta-D-manno-heptose 1-phosphate + ATP + H(+) = ADP-D-glycero-beta-D-manno-heptose + diphosphate. It participates in nucleotide-sugar biosynthesis; ADP-L-glycero-beta-D-manno-heptose biosynthesis; ADP-L-glycero-beta-D-manno-heptose from D-glycero-beta-D-manno-heptose 7-phosphate: step 1/4. It functions in the pathway nucleotide-sugar biosynthesis; ADP-L-glycero-beta-D-manno-heptose biosynthesis; ADP-L-glycero-beta-D-manno-heptose from D-glycero-beta-D-manno-heptose 7-phosphate: step 3/4. Functionally, catalyzes the phosphorylation of D-glycero-D-manno-heptose 7-phosphate at the C-1 position to selectively form D-glycero-beta-D-manno-heptose-1,7-bisphosphate. Its function is as follows. Catalyzes the ADP transfer from ATP to D-glycero-beta-D-manno-heptose 1-phosphate, yielding ADP-D-glycero-beta-D-manno-heptose. In Shewanella amazonensis (strain ATCC BAA-1098 / SB2B), this protein is Bifunctional protein HldE.